The primary structure comprises 105 residues: Large ribosomal subunit protein uL24 (105 aa).

Belongs to the universal ribosomal protein uL24 family. In terms of assembly, part of the 50S ribosomal subunit.

One of two assembly initiator proteins, it binds directly to the 5'-end of the 23S rRNA, where it nucleates assembly of the 50S subunit. Its function is as follows. One of the proteins that surrounds the polypeptide exit tunnel on the outside of the subunit. This chain is Large ribosomal subunit protein uL24, found in Staphylococcus epidermidis (strain ATCC 35984 / DSM 28319 / BCRC 17069 / CCUG 31568 / BM 3577 / RP62A).